We begin with the raw amino-acid sequence, 398 residues long: Methionine import ATP-binding protein MetN 2 (398 aa).

An ABC transporter domain is found at 43 to 282 (VSLEQVGKVF…PRHGATRALL (240 aa)). 79–86 (GRSGAGKS) provides a ligand contact to ATP.

Belongs to the ABC transporter superfamily. Methionine importer (TC 3.A.1.24) family. The complex is composed of two ATP-binding proteins (MetN), two transmembrane proteins (MetI) and a solute-binding protein (MetQ).

It localises to the cell inner membrane. It carries out the reaction L-methionine(out) + ATP + H2O = L-methionine(in) + ADP + phosphate + H(+). The enzyme catalyses D-methionine(out) + ATP + H2O = D-methionine(in) + ADP + phosphate + H(+). Part of the ABC transporter complex MetNIQ involved in methionine import. Responsible for energy coupling to the transport system. This is Methionine import ATP-binding protein MetN 2 from Burkholderia lata (strain ATCC 17760 / DSM 23089 / LMG 22485 / NCIMB 9086 / R18194 / 383).